The sequence spans 384 residues: tRNA-dihydrouridine(20) synthase [NAD(P)+] (384 aa).

FMN-binding positions include 12 to 14 (PMV) and Gln88. The Proton donor role is filled by Cys117. FMN contacts are provided by residues Lys160, His188, 222-224 (NGA), and 249-250 (AE). Positions 359–384 (KQKRKQTDHIGSDTKKQKVVPLPTDI) are disordered. The span at 363–374 (KQTDHIGSDTKK) shows a compositional bias: basic and acidic residues.

Belongs to the Dus family. Dus2 subfamily. In terms of assembly, monomer. Requires FMN as cofactor. In terms of processing, N-glycosylated.

Its subcellular location is the cytoplasm. It is found in the nucleus. The catalysed reaction is 5,6-dihydrouridine(20) in tRNA + NADP(+) = uridine(20) in tRNA + NADPH + H(+). It catalyses the reaction 5,6-dihydrouridine(20) in tRNA + NAD(+) = uridine(20) in tRNA + NADH + H(+). The enzyme catalyses a 5,6-dihydrouridine in mRNA + NAD(+) = a uridine in mRNA + NADH + H(+). It carries out the reaction a 5,6-dihydrouridine in mRNA + NADP(+) = a uridine in mRNA + NADPH + H(+). In terms of biological role, catalyzes the NADPH-dependent synthesis of dihydrouridine, a modified base found in the D-loop of most tRNAs. Specifically modifies U20 in cytoplasmic tRNAs. Also able to mediate dihydrouridylation of some mRNAs, thereby affecting their translation. This is tRNA-dihydrouridine(20) synthase [NAD(P)+] (SMM1) from Saccharomyces cerevisiae (strain ATCC 204508 / S288c) (Baker's yeast).